We begin with the raw amino-acid sequence, 511 residues long: Phenylalanine--tRNA ligase alpha subunit (511 aa).

L-phenylalanine-binding positions include threonine 352, 390-392, tyrosine 429, and phenylalanine 455; that span reads QVE.

This sequence belongs to the class-II aminoacyl-tRNA synthetase family. Phe-tRNA synthetase alpha subunit type 2 subfamily. As to quaternary structure, tetramer of two alpha and two beta subunits. Mg(2+) serves as cofactor.

It localises to the cytoplasm. The catalysed reaction is tRNA(Phe) + L-phenylalanine + ATP = L-phenylalanyl-tRNA(Phe) + AMP + diphosphate + H(+). The polypeptide is Phenylalanine--tRNA ligase alpha subunit (Methanothermobacter thermautotrophicus (strain ATCC 29096 / DSM 1053 / JCM 10044 / NBRC 100330 / Delta H) (Methanobacterium thermoautotrophicum)).